An 85-amino-acid chain; its full sequence is Large ribosomal subunit protein bL27 (85 aa).

The interval 1–23 is disordered; sequence MAHKKAGGSSRNGRDSESKRLGV.

The protein belongs to the bacterial ribosomal protein bL27 family.

The protein is Large ribosomal subunit protein bL27 of Nitrosococcus oceani (strain ATCC 19707 / BCRC 17464 / JCM 30415 / NCIMB 11848 / C-107).